The following is a 521-amino-acid chain: Jacalin-related lectin 38 (521 aa).

The 47-residue stretch at 2-48 folds into the F-box domain; it reads MQPDHDLPYDLEGEILSHLPIQILARFRCVCKRWNTLFKERRFFNSD. Kelch repeat units lie at residues 145 to 190, 326 to 373, and 486 to 521; these read KHYK…PYSV, YIYI…ITQH, and MSFV…SPLP. The 143-residue stretch at 377-519 folds into the Jacalin-type lectin domain; it reads SRFAPLRGIQ…LTAFGVHFSP (143 aa).

Belongs to the jacalin lectin family.

This chain is Jacalin-related lectin 38 (JAL38), found in Arabidopsis thaliana (Mouse-ear cress).